We begin with the raw amino-acid sequence, 166 residues long: Cofilin-2 (166 aa).

Positions glycine 4–leucine 153 constitute an ADF-H domain. Phosphoserine is present on serine 24. Residues lysine 30–lysine 34 carry the Nuclear localization signal motif.

It belongs to the actin-binding proteins ADF family. Post-translationally, the phosphorylation of Ser-24 may prevent recognition of the nuclear localization signal. In terms of tissue distribution, widely distributed in various tissues.

It localises to the nucleus matrix. The protein localises to the cytoplasm. Its subcellular location is the cytoskeleton. Its function is as follows. Controls reversibly actin polymerization and depolymerization in a pH-sensitive manner. It has the ability to bind G- and F-actin in a 1:1 ratio of cofilin to actin. It is the major component of intranuclear and cytoplasmic actin rods. The chain is Cofilin-2 (CFL2) from Gallus gallus (Chicken).